The chain runs to 278 residues: Phosphatidylglycerol--prolipoprotein diacylglyceryl transferase (278 aa).

The next 4 helical transmembrane spans lie at 19–39 (WYGI…INEG), 49–69 (FIDF…IYYV), 86–106 (IWNG…VLLI), and 112–132 (MLPP…AQVI). Arginine 134 contacts a 1,2-diacyl-sn-glycero-3-phospho-(1'-sn-glycerol). Transmembrane regions (helical) follow at residues 174–194 (QPTY…ILSL), 204–224 (GEIF…VEGM), and 235–255 (IRVS…LWIY).

It belongs to the Lgt family.

The protein resides in the cell membrane. It catalyses the reaction L-cysteinyl-[prolipoprotein] + a 1,2-diacyl-sn-glycero-3-phospho-(1'-sn-glycerol) = an S-1,2-diacyl-sn-glyceryl-L-cysteinyl-[prolipoprotein] + sn-glycerol 1-phosphate + H(+). The protein operates within protein modification; lipoprotein biosynthesis (diacylglyceryl transfer). Catalyzes the transfer of the diacylglyceryl group from phosphatidylglycerol to the sulfhydryl group of the N-terminal cysteine of a prolipoprotein, the first step in the formation of mature lipoproteins. This chain is Phosphatidylglycerol--prolipoprotein diacylglyceryl transferase, found in Lactobacillus johnsonii (strain CNCM I-12250 / La1 / NCC 533).